A 438-amino-acid chain; its full sequence is Fumarate hydratase class II (438 aa).

Substrate contacts are provided by residues 76–78 (SGT), 101–104 (HPND), 111–113 (SSN), and threonine 159. The active-site Proton donor/acceptor is histidine 160. Residue serine 291 is part of the active site. Residues serine 292 and 297–299 (KTN) contribute to the substrate site.

It belongs to the class-II fumarase/aspartase family. Fumarase subfamily. Homotetramer.

Its subcellular location is the cytoplasm. It carries out the reaction (S)-malate = fumarate + H2O. The protein operates within carbohydrate metabolism; tricarboxylic acid cycle; (S)-malate from fumarate: step 1/1. In terms of biological role, involved in the TCA cycle. Catalyzes the stereospecific interconversion of fumarate to L-malate. In Saccharolobus solfataricus (strain ATCC 35092 / DSM 1617 / JCM 11322 / P2) (Sulfolobus solfataricus), this protein is Fumarate hydratase class II.